The sequence spans 329 residues: Glycerol-3-phosphate dehydrogenase [NAD(P)+] (329 aa).

Tyrosine 14, arginine 34, and lysine 108 together coordinate NADPH. Residues lysine 108, glycine 137, and serine 139 each contribute to the sn-glycerol 3-phosphate site. Alanine 141 contributes to the NADPH binding site. Residues lysine 192, aspartate 245, serine 255, arginine 256, and asparagine 257 each coordinate sn-glycerol 3-phosphate. Catalysis depends on lysine 192, which acts as the Proton acceptor. Arginine 256 contacts NADPH. 2 residues coordinate NADPH: isoleucine 280 and glutamate 282.

This sequence belongs to the NAD-dependent glycerol-3-phosphate dehydrogenase family.

It is found in the cytoplasm. The catalysed reaction is sn-glycerol 3-phosphate + NAD(+) = dihydroxyacetone phosphate + NADH + H(+). It catalyses the reaction sn-glycerol 3-phosphate + NADP(+) = dihydroxyacetone phosphate + NADPH + H(+). It functions in the pathway membrane lipid metabolism; glycerophospholipid metabolism. Functionally, catalyzes the reduction of the glycolytic intermediate dihydroxyacetone phosphate (DHAP) to sn-glycerol 3-phosphate (G3P), the key precursor for phospholipid synthesis. This is Glycerol-3-phosphate dehydrogenase [NAD(P)+] from Wigglesworthia glossinidia brevipalpis.